The chain runs to 293 residues: DNA-directed RNA polymerase III subunit rpc6 (293 aa).

The protein belongs to the eukaryotic RPC34/RPC39 RNA polymerase subunit family. As to quaternary structure, component of the RNA polymerase III (Pol III) complex.

It is found in the nucleus. In terms of biological role, DNA-dependent RNA polymerase catalyzes the transcription of DNA into RNA using the four ribonucleoside triphosphates as substrates. Specific peripheric component of RNA polymerase III which synthesizes small RNAs, such as 5S rRNA and tRNAs. May direct RNA Pol III binding to the TFIIIB-DNA complex. In Dictyostelium discoideum (Social amoeba), this protein is DNA-directed RNA polymerase III subunit rpc6 (polr3f).